The primary structure comprises 234 residues: MQFTTPLQSAILIKRYKRFLADVRRPDGQIITLHCANTGAMTGCATPGDTVWYSSSDNPKRKYPSSWELTHTQAGDWICINTLRANTLVYEAIAQQRIGEVSGYTKIRSEVRYGAENSRIDLLLQAEDRPDCYIEVKSVTLLQSACGYFPDAVTERGQKHLRELQHQVQSGVRAVLFFAVLHSGITHVRAARHIDPRYAQLLAQASDLGVEVLCYGAQINPAGIRLTQPLPVTV.

Belongs to the SfsA family.

In Edwardsiella ictaluri (strain 93-146), this protein is Sugar fermentation stimulation protein homolog.